Reading from the N-terminus, the 714-residue chain is Fatty acid oxidation complex subunit alpha (714 aa).

Positions 1–190 (MDTVSAFKLE…KAGLVDEVVP (190 aa)) are enoyl-CoA hydratase. The segment at 306–714 (GSLRSVAVLG…TFWPADERLT (409 aa)) is 3-hydroxyacyl-CoA dehydrogenase.

It in the N-terminal section; belongs to the enoyl-CoA hydratase/isomerase family. The protein in the central section; belongs to the 3-hydroxyacyl-CoA dehydrogenase family. In terms of assembly, heterotetramer of two alpha chains (FadJ) and two beta chains (FadI).

The protein resides in the cytoplasm. It catalyses the reaction a (3S)-3-hydroxyacyl-CoA = a (2E)-enoyl-CoA + H2O. It carries out the reaction a 4-saturated-(3S)-3-hydroxyacyl-CoA = a (3E)-enoyl-CoA + H2O. The enzyme catalyses a (3S)-3-hydroxyacyl-CoA + NAD(+) = a 3-oxoacyl-CoA + NADH + H(+). The catalysed reaction is (3S)-3-hydroxybutanoyl-CoA = (3R)-3-hydroxybutanoyl-CoA. It participates in lipid metabolism; fatty acid beta-oxidation. Functionally, catalyzes the formation of a hydroxyacyl-CoA by addition of water on enoyl-CoA. Also exhibits 3-hydroxyacyl-CoA epimerase and 3-hydroxyacyl-CoA dehydrogenase activities. The protein is Fatty acid oxidation complex subunit alpha of Klebsiella pneumoniae subsp. pneumoniae (strain ATCC 700721 / MGH 78578).